A 499-amino-acid chain; its full sequence is Putative DUF21 domain-containing protein At1g03270 (499 aa).

Residues Met1–Trp32 lie on the Extracellular side of the membrane. One can recognise a CNNM transmembrane domain in the interval Gly29–Glu211. The helical transmembrane segment at Trp33–Leu53 threads the bilayer. Residues Thr54–His91 are Cytoplasmic-facing. Residues Gln92–Leu112 form a helical membrane-spanning segment. Residues Asp113–Lys114 are Extracellular-facing. Residues Ile115–Ile135 traverse the membrane as a helical segment. Residues Ile136 to Gly145 are Cytoplasmic-facing. The chain crosses the membrane as a helical span at residues Leu146 to Ile166. The Extracellular segment spans residues Ala167 to Arg499. An N-linked (GlcNAc...) asparagine glycan is attached at Asn181. 3 consecutive CBS domains span residues Met230 to Val291, Ser295 to Thr359, and His365 to Glu431. 3 N-linked (GlcNAc...) asparagine glycosylation sites follow: Asn357, Asn391, and Asn484.

It is found in the membrane. The polypeptide is Putative DUF21 domain-containing protein At1g03270 (CBSDUF4) (Arabidopsis thaliana (Mouse-ear cress)).